Reading from the N-terminus, the 314-residue chain is Inositol oxygenase 5 (314 aa).

Substrate-binding positions include Arg-54 and 112–114 (DES). Residues His-125, His-150, and Asp-151 each coordinate Fe cation. Substrate is bound by residues Lys-154 and 171-172 (GD). Residues His-223, His-249, and Asp-282 each contribute to the Fe cation site. 249-250 (HS) serves as a coordination point for substrate.

It belongs to the myo-inositol oxygenase family. It depends on Fe cation as a cofactor. In terms of tissue distribution, expressed in flowers and siliques.

The protein resides in the cytoplasm. The enzyme catalyses myo-inositol + O2 = D-glucuronate + H2O + H(+). Its pathway is polyol metabolism; myo-inositol degradation into D-glucuronate; D-glucuronate from myo-inositol: step 1/1. Functionally, involved in the biosynthesis of UDP-glucuronic acid (UDP-GlcA), providing nucleotide sugars for cell-wall polymers. May be also involved in plant ascorbate biosynthesis. This Arabidopsis thaliana (Mouse-ear cress) protein is Inositol oxygenase 5 (MIOX5).